A 779-amino-acid polypeptide reads, in one-letter code: Nucleolar complex protein 3 homolog (779 aa).

Disordered stretches follow at residues 1-20 (MGFA…TNKT) and 100-189 (NAKR…SHLS). Residues 114–124 (DSDEDEDEDDV) are compositionally biased toward acidic residues. Residues 136–160 (EEGHEELLPIKLKDGTLIRPTREKE) are compositionally biased toward basic and acidic residues. Residues 161 to 178 (VEEQEEEEKSDIDEGEED) show a composition bias toward acidic residues. A coiled-coil region spans residues 434-474 (AKKYQIKKERASKTAKKYKKQLARLEADLLEVEAEESLTKK).

The protein belongs to the CBF/MAK21 family.

The protein resides in the nucleus. Its subcellular location is the nucleolus. The sequence is that of Nucleolar complex protein 3 homolog from Caenorhabditis briggsae.